The sequence spans 442 residues: UDP-N-acetylglucosamine--peptide N-acetylglucosaminyltransferase stabilizing protein GtfB (442 aa).

It belongs to the GtfB family. In terms of assembly, interacts with glycosyltransferase GtfA (Gtf1). Interacts with glycosyltransferase GtfA; probably forms a heterotetramer with 2 subunits each of GtfA and GtfB. Part of the accessory SecA2/SecY2 protein translocation apparatus.

It localises to the cell membrane. Its pathway is protein modification; protein glycosylation. Functionally, required for the polymorphic O-glycosylation of the serine-rich repeat protein Srr2. A stabilizing protein that is part of the accessory SecA2/SecY2 system specifically required to export serine-rich repeat proteins, probably Srr2 in this organism. The GtfA-GtfB (Gtf1-Gtf2 in this bacteria) complex adds GlcNAc from UDP-GlcNAc to Srr2 substrate, attaching the first sugar residue. Stabilizes the glycosylation activity of GtfA in vivo. Upon expression in a gtfB deletion mutant of S.parasanguis, GtfB confers incorrect glycosylation and partial complementation of a biofilm formation defect, while GtfA/GtfB restores correct expression of serine-rich repeat protein Fap1 and completely restores a biofilm formation defect in a S.parasanguis double gtfA-gtfB deletion. This chain is UDP-N-acetylglucosamine--peptide N-acetylglucosaminyltransferase stabilizing protein GtfB, found in Streptococcus agalactiae.